The chain runs to 444 residues: Transcription activator AKTR-3 (444 aa).

Residues 16 to 43 (CDFCTQSKLRCNKNKPSCRRCTIQQQPC) constitute a DNA-binding region (zn(2)-C6 fungal-type). Residues 49–89 (RRTGRPPKHPRTANDCQEANGQHGEQDPVTSTPGGSCQQQS) form a disordered region. Residues 50–59 (RTGRPPKHPR) show a composition bias toward basic residues. Polar residues predominate over residues 76 to 89 (PVTSTPGGSCQQQS).

It is found in the nucleus. Its function is as follows. Transcription factor that regulates the expression of the gene clusters that mediate the biosynthesis of the host-selective toxins (HSTs) AK-toxins responsible for Japanese pear black spot disease by the Japanese pear pathotype. AK-toxins are esters of 9,10-epoxy 8-hydroxy 9-methyldecatrienoic acid (EDA). On cellular level, AK-toxins affect plasma membrane of susceptible cells and cause a sudden increase in loss of K(+) after a few minutes of toxin treatment. The protein is Transcription activator AKTR-3 of Alternaria alternata (Alternaria rot fungus).